A 324-amino-acid chain; its full sequence is Malate dehydrogenase (324 aa).

NAD(+) is bound by residues 21–26 and aspartate 45; that span reads GAGRVG. Positions 94 and 100 each coordinate substrate. NAD(+) contacts are provided by residues asparagine 107 and 130–132; that span reads VTN. Substrate is bound by residues asparagine 132 and arginine 163. Histidine 187 functions as the Proton acceptor in the catalytic mechanism.

This sequence belongs to the LDH/MDH superfamily. MDH type 3 family.

The enzyme catalyses (S)-malate + NAD(+) = oxaloacetate + NADH + H(+). In terms of biological role, catalyzes the reversible oxidation of malate to oxaloacetate. The protein is Malate dehydrogenase of Trichormus variabilis (strain ATCC 29413 / PCC 7937) (Anabaena variabilis).